The following is a 445-amino-acid chain: Phosphoglucosamine mutase (445 aa).

The active-site Phosphoserine intermediate is S103. S103, D240, D242, and D244 together coordinate Mg(2+). S103 carries the post-translational modification Phosphoserine.

It belongs to the phosphohexose mutase family. Mg(2+) is required as a cofactor. In terms of processing, activated by phosphorylation.

The catalysed reaction is alpha-D-glucosamine 1-phosphate = D-glucosamine 6-phosphate. Functionally, catalyzes the conversion of glucosamine-6-phosphate to glucosamine-1-phosphate. In Cellvibrio japonicus (strain Ueda107) (Pseudomonas fluorescens subsp. cellulosa), this protein is Phosphoglucosamine mutase.